The following is a 418-amino-acid chain: Glutamyl-tRNA reductase (418 aa).

Substrate is bound by residues 49 to 52 (TCNR), Ser109, 114 to 116 (EPQ), and Gln120. Cys50 functions as the Nucleophile in the catalytic mechanism. Position 189–194 (189–194 (GAGETI)) interacts with NADP(+).

This sequence belongs to the glutamyl-tRNA reductase family. As to quaternary structure, homodimer.

It catalyses the reaction (S)-4-amino-5-oxopentanoate + tRNA(Glu) + NADP(+) = L-glutamyl-tRNA(Glu) + NADPH + H(+). It participates in porphyrin-containing compound metabolism; protoporphyrin-IX biosynthesis; 5-aminolevulinate from L-glutamyl-tRNA(Glu): step 1/2. Its function is as follows. Catalyzes the NADPH-dependent reduction of glutamyl-tRNA(Glu) to glutamate 1-semialdehyde (GSA). This Pectobacterium atrosepticum (strain SCRI 1043 / ATCC BAA-672) (Erwinia carotovora subsp. atroseptica) protein is Glutamyl-tRNA reductase.